The primary structure comprises 526 residues: Phosphoenolpyruvate carboxylase (526 aa).

Belongs to the PEPCase type 2 family. Homotetramer. It depends on Mg(2+) as a cofactor.

The enzyme catalyses oxaloacetate + phosphate = phosphoenolpyruvate + hydrogencarbonate. In terms of biological role, catalyzes the irreversible beta-carboxylation of phosphoenolpyruvate (PEP) to form oxaloacetate (OAA), a four-carbon dicarboxylic acid source for the tricarboxylic acid cycle. The sequence is that of Phosphoenolpyruvate carboxylase from Methanosarcina acetivorans (strain ATCC 35395 / DSM 2834 / JCM 12185 / C2A).